A 438-amino-acid chain; its full sequence is tRNA modification GTPase MnmE (438 aa).

Residues Arg20, Glu78, and Lys117 each coordinate (6S)-5-formyl-5,6,7,8-tetrahydrofolate. Residues Gly214 to Tyr359 form the TrmE-type G domain. Asn224 is a K(+) binding site. Residues Asn224–Thr229, Thr243–Thr249, and Asp268–Gly271 contribute to the GTP site. Ser228 serves as a coordination point for Mg(2+). 3 residues coordinate K(+): Thr243, Ile245, and Thr248. Thr249 contacts Mg(2+). Lys438 provides a ligand contact to (6S)-5-formyl-5,6,7,8-tetrahydrofolate.

This sequence belongs to the TRAFAC class TrmE-Era-EngA-EngB-Septin-like GTPase superfamily. TrmE GTPase family. Homodimer. Heterotetramer of two MnmE and two MnmG subunits. K(+) is required as a cofactor.

It is found in the cytoplasm. Its function is as follows. Exhibits a very high intrinsic GTPase hydrolysis rate. Involved in the addition of a carboxymethylaminomethyl (cmnm) group at the wobble position (U34) of certain tRNAs, forming tRNA-cmnm(5)s(2)U34. This Ureaplasma parvum serovar 3 (strain ATCC 27815 / 27 / NCTC 11736) protein is tRNA modification GTPase MnmE.